The primary structure comprises 177 residues: Protein CutA 1, chloroplastic (177 aa).

Residues 1–60 (MPLLPSPLGSLSAAATAAPRRAAAAAGLSPLLLRRRAPIAGALLFLSLGAFAGVRSLSSS) constitute a chloroplast transit peptide.

Belongs to the CutA family. As to quaternary structure, homotrimer.

Its subcellular location is the plastid. The protein resides in the chloroplast. The protein is Protein CutA 1, chloroplastic (CUTA1) of Oryza sativa subsp. japonica (Rice).